The primary structure comprises 549 residues: Glucose-6-phosphate isomerase (549 aa).

Glu-355 functions as the Proton donor in the catalytic mechanism. Residues His-386 and Lys-514 contribute to the active site.

It belongs to the GPI family.

The protein resides in the cytoplasm. It catalyses the reaction alpha-D-glucose 6-phosphate = beta-D-fructose 6-phosphate. It functions in the pathway carbohydrate biosynthesis; gluconeogenesis. The protein operates within carbohydrate degradation; glycolysis; D-glyceraldehyde 3-phosphate and glycerone phosphate from D-glucose: step 2/4. In terms of biological role, catalyzes the reversible isomerization of glucose-6-phosphate to fructose-6-phosphate. The protein is Glucose-6-phosphate isomerase of Buchnera aphidicola subsp. Acyrthosiphon pisum (strain APS) (Acyrthosiphon pisum symbiotic bacterium).